The primary structure comprises 144 residues: Alpha-crystallin (144 aa).

A sHSP domain is found at proline 33–threonine 143.

It belongs to the small heat shock protein (HSP20) family.

It is found in the secreted. It localises to the cell wall. Its subcellular location is the cytoplasm. Functionally, acts as a chaperone. The protein is Alpha-crystallin (hspX) of Mycobacterium bovis (strain ATCC BAA-935 / AF2122/97).